A 581-amino-acid chain; its full sequence is Arginine--tRNA ligase (581 aa).

Residues 131–141 (ANPTGPLHVGH) carry the 'HIGH' region motif.

The protein belongs to the class-I aminoacyl-tRNA synthetase family. As to quaternary structure, monomer.

It localises to the cytoplasm. It carries out the reaction tRNA(Arg) + L-arginine + ATP = L-arginyl-tRNA(Arg) + AMP + diphosphate. The polypeptide is Arginine--tRNA ligase (Ruegeria pomeroyi (strain ATCC 700808 / DSM 15171 / DSS-3) (Silicibacter pomeroyi)).